Consider the following 528-residue polypeptide: PH domain-containing protein DDB_G0267786 (528 aa).

Residues 59–180 form the PH domain; it reads SDVFSGYLVK…WIEIFKTCCR (122 aa).

The chain is PH domain-containing protein DDB_G0267786 from Dictyostelium discoideum (Social amoeba).